The primary structure comprises 76 residues: U-scoloptoxin(15)-Ssd3b (76 aa).

Positions 1–23 are cleaved as a signal peptide; it reads MEKKIIFLCFLVALLTFPEFISS.

Post-translationally, contains 2 disulfide bonds. As to expression, expressed by the venom gland.

It is found in the secreted. The sequence is that of U-scoloptoxin(15)-Ssd3b from Scolopendra dehaani (Thai centipede).